The primary structure comprises 651 residues: DNA endonuclease RBBP8 (651 aa).

Coiled coils occupy residues 35 to 84 (LQEL…EDRL) and 117 to 138 (ISEL…SLEL). Disordered regions lie at residues 138–199 (LERL…PESR), 363–433 (NGRL…EHQA), and 487–539 (YESC…SDKS). Positions 363–379 (NGRLQSKNQETSEIETT) are enriched in polar residues. Basic and acidic residues predominate over residues 380–391 (QDSKKKCLDGHT). A compositionally biased stretch (acidic residues) spans 503–515 (VYEEEREEDDPEE). The span at 525–539 (RPADRKPLVSDSDKS) shows a compositional bias: basic and acidic residues. 2 positions are modified to phosphothreonine: T599 and T611.

This sequence belongs to the COM1/SAE2/CtIP family. In terms of assembly, homotetramer; formed by antiparallel association of helical extensions protruding from the N-termini of two parallel coiled-coil dimers. Interacts with the MRN complex; the interaction links DNA sensing to resection. Interacts with samhd1. Post-translationally, phosphorylation at Thr-599 and Thr-611 promote interaction with nbn and recruitment to double-strand breaks (DSBs).

It localises to the nucleus. Its subcellular location is the chromosome. Functionally, endonuclease that cooperates with the MRE11-RAD50-NBN (MRN) complex in DNA-end resection, the first step of double-strand break (DSB) repair through the homologous recombination (HR) pathway. Functions downstream of the MRN complex and ATM, promotes ATR activation and its recruitment to DSBs in the S/G2 phase facilitating the generation of ssDNA. Specifically promotes the endonuclease activity of the MRN complex to clear DNA ends containing protein adducts: recruited to DSBs by nbn following phosphorylation, and promotes the endonuclease of mre11 to clear protein-DNA adducts and generate clean double-strand break ends. The chain is DNA endonuclease RBBP8 (rbbp8) from Danio rerio (Zebrafish).